Here is a 122-residue protein sequence, read N- to C-terminus: Small ribosomal subunit protein uS13 (122 aa).

Positions 98 to 122 are disordered; that stretch reads VRGQRTKTNARTRKGKRKTVGAKAK.

This sequence belongs to the universal ribosomal protein uS13 family. As to quaternary structure, part of the 30S ribosomal subunit. Forms a loose heterodimer with protein S19. Forms two bridges to the 50S subunit in the 70S ribosome.

Located at the top of the head of the 30S subunit, it contacts several helices of the 16S rRNA. In the 70S ribosome it contacts the 23S rRNA (bridge B1a) and protein L5 of the 50S subunit (bridge B1b), connecting the 2 subunits; these bridges are implicated in subunit movement. Contacts the tRNAs in the A and P-sites. The polypeptide is Small ribosomal subunit protein uS13 (Nautilia profundicola (strain ATCC BAA-1463 / DSM 18972 / AmH)).